A 189-amino-acid polypeptide reads, in one-letter code: MINTNDFKTGKTIKFNNQIYQILEFLHVKPGKGSAFVRTKLRNLRTGSVIDYTFNAGIKVQPALITKIKMQLIYVLEDNYIFMNTQNYEQLEINKYQLKDFLKYLYEGLLVDIIFYENDEIVGISLPEKISIKVAYTEPGAKGDTKTNSLKDATLETGLVIKVPLFINIGEKIIINTETGLYLSRDNNK.

The protein belongs to the elongation factor P family.

The protein localises to the cytoplasm. It participates in protein biosynthesis; polypeptide chain elongation. Functionally, involved in peptide bond synthesis. Stimulates efficient translation and peptide-bond synthesis on native or reconstituted 70S ribosomes in vitro. Probably functions indirectly by altering the affinity of the ribosome for aminoacyl-tRNA, thus increasing their reactivity as acceptors for peptidyl transferase. This chain is Elongation factor P, found in Aster yellows witches'-broom phytoplasma (strain AYWB).